Reading from the N-terminus, the 176-residue chain is Ribosome maturation factor RimM (176 aa).

In terms of domain architecture, PRC barrel spans 93-172; it reads EGEFFYFDVL…EILTKDAKSI (80 aa).

Belongs to the RimM family. In terms of assembly, binds ribosomal protein uS19.

It localises to the cytoplasm. An accessory protein needed during the final step in the assembly of 30S ribosomal subunit, possibly for assembly of the head region. Essential for efficient processing of 16S rRNA. May be needed both before and after RbfA during the maturation of 16S rRNA. It has affinity for free ribosomal 30S subunits but not for 70S ribosomes. The protein is Ribosome maturation factor RimM of Campylobacter curvus (strain 525.92).